A 141-amino-acid chain; its full sequence is Hemoglobin subunit alpha (141 aa).

Residues valine 1–arginine 141 enclose the Globin domain. Serine 3 carries the phosphoserine modification. The residue at position 7 (lysine 7) is an N6-succinyllysine. At threonine 8 the chain carries Phosphothreonine. At lysine 11 the chain carries N6-succinyllysine. Lysine 16 carries the N6-acetyllysine; alternate modification. At lysine 16 the chain carries N6-succinyllysine; alternate. Residue serine 35 is modified to Phosphoserine. Lysine 40 carries the N6-succinyllysine modification. Residue histidine 58 participates in O2 binding. Histidine 87 provides a ligand contact to heme b. Serine 102 carries the phosphoserine modification. Threonine 108 bears the Phosphothreonine mark. A phosphoserine mark is found at serine 124 and serine 131. Phosphothreonine occurs at positions 134 and 137. Serine 138 bears the Phosphoserine mark.

This sequence belongs to the globin family. Heterotetramer of two alpha chains and two beta chains. Red blood cells.

In terms of biological role, involved in oxygen transport from the lung to the various peripheral tissues. Functionally, hemopressin acts as an antagonist peptide of the cannabinoid receptor CNR1. Hemopressin-binding efficiently blocks cannabinoid receptor CNR1 and subsequent signaling. In Physeter macrocephalus (Sperm whale), this protein is Hemoglobin subunit alpha (HBA).